The primary structure comprises 227 residues: MERPLESYKKEAAHAAIAYVQDGMVVGLGTGSTARYAVLELARRLREGELKGVVGVPTSRATEELAKREGIPLVDLPPEGVDLAIDGADEIAPGLALIKGMGGALLREKIVERVAKEFIVIADHTKKVPVLGRGPVPVEIVPFGYRATLKAIADLGGEPELRMDGDEFYFTDGGHLIADCRFGPIGDPLGLHRALLEIPGVVETGLFVGMATRALVAGPFGVEELLP.

Substrate-binding positions include 30–33 (TGST), 86–89 (DGAD), and 99–102 (KGMG). The active-site Proton acceptor is the glutamate 108. A substrate-binding site is contributed by lysine 126.

The protein belongs to the ribose 5-phosphate isomerase family. In terms of assembly, homodimer.

It carries out the reaction aldehydo-D-ribose 5-phosphate = D-ribulose 5-phosphate. It functions in the pathway carbohydrate degradation; pentose phosphate pathway; D-ribose 5-phosphate from D-ribulose 5-phosphate (non-oxidative stage): step 1/1. In terms of biological role, catalyzes the reversible conversion of ribose-5-phosphate to ribulose 5-phosphate. This Thermus thermophilus (strain ATCC 27634 / DSM 579 / HB8) protein is Ribose-5-phosphate isomerase A.